We begin with the raw amino-acid sequence, 365 residues long: Peptide chain release factor 2 (365 aa).

N5-methylglutamine is present on Gln-252.

This sequence belongs to the prokaryotic/mitochondrial release factor family. In terms of processing, methylated by PrmC. Methylation increases the termination efficiency of RF2.

The protein localises to the cytoplasm. In terms of biological role, peptide chain release factor 2 directs the termination of translation in response to the peptide chain termination codons UGA and UAA. The polypeptide is Peptide chain release factor 2 (Pasteurella multocida (strain Pm70)).